The chain runs to 144 residues: Large ribosomal subunit protein uL15 (144 aa).

The segment covering 1-13 has biased composition (basic and acidic residues); it reads MKLNELKPAEGSR. A disordered region spans residues 1 to 47; the sequence is MKLNELKPAEGSRKVRNRVGRGDSSGNGKTAGRGQKGQKARSKTRLG. Residues 23 to 35 show a composition bias toward gly residues; the sequence is DSSGNGKTAGRGQ.

The protein belongs to the universal ribosomal protein uL15 family. In terms of assembly, part of the 50S ribosomal subunit.

Its function is as follows. Binds to the 23S rRNA. The sequence is that of Large ribosomal subunit protein uL15 from Levilactobacillus brevis (strain ATCC 367 / BCRC 12310 / CIP 105137 / JCM 1170 / LMG 11437 / NCIMB 947 / NCTC 947) (Lactobacillus brevis).